The chain runs to 2864 residues: MPVISTQTSPVPAPRTRKNKQTQASYPVSIKTSVERGQRAKRKVQRDARPRNYKIAGIHDGLQTLAQAALPAHGWGRQDPRHKSRNLGILLDYPLGWIGDVTTHTPLVGPLVAGAVVRPVCQIVRLLEDGVNWATGWFGVHLFVVCLLSLACPCSGARVTDPDTNTTILTNCCQRNQVIYCSPSTCLHEPGCVICADECWVPANPYISHPSNWTGTDSFLADHIDFVMGALVTCDALDIGELCGACVLVGDWLVRHWLIHIDLNETGTCYLEVPTGIDPGFLGFIGWMAGKVEAVIFLTKLASQVPYAIATMFSSVHYLAVGALIYYASRGKWYQLLLALMLYIEATSGNPIRVPTGCSIAEFCSPLMIPCPCHSYLSENVSEVICYSPKWTRPVTLEYNNSISWYPYTIPGARGCMVKFKNNTWGCCRIRNVPSYCTMGTDAVWNDTRNTYEACGVTPWLTTAWHNGSALKLAILQYPGSKEMFKPHNWMSGHLYFEGSDTPIVYFYDPVNSTLLPPERWARLPGTPPVVRGSWLQVPQGFYSDVKDLATGLITKDKAWKNYQVLYSATGALSLTGVTTKAVVLILLGLCGSKYLILAYLCYLSLCFGRASGYPLRPVLPSQSYLQAGWDVLSKAQVAPFALIFFICCYLRCRLRYAALLGFVPMAAGLPLTFFVAAAAAQPDYDWWVRLLVAGLVLWAGRDRGPRIALLVGPWPLVALLTLLHLATPASAFDTEIIGGLTIPPVVALVVMSRFGFFAHLLPRCALVNSYLWQRWENWFWNVTLRPERFLLVLVCFPGATYDTLVTFCVCHVALLCLTSSAASFFGTDSRVRAHRMLVRLGKCHAWYSHYVLKFFLLVFGENGVFFYKHLHGDVLPNDFASKLPLQEPFFPFEGKARVYRNEGRRLACGDTVDGLPVVARLGDLVFAGLAMPPDGWAITAPFTLQCLSERGTLSAMAVVMTGIDPRTWTGTIFRLGSLATSYMGFVCDNVLYTAHHGSKGRRLAHPTGSIHPITVDAANDQDIYQPPCGAGSLTRCSCGETKGYLVTRLGSLVEVNKSDDPYWCVCGALPMAVAKGSSGAPILCSSGHVIGMFTAARNSGGSVSQIRVRPLVCAGYHPQYTAHATLDTKPTVPNEYSVQILIAPTGSGKSTKLPLSYMQEKYEVLVLNPSVATTASMPKYMHATYGVNPNCYFNGKCTNTGASLTYSTYGMYLTGACSRNYDVIICDECHATDATTVLGIGKVLTEAPSKNVRLVVLATATPPGVIPTPHANITEIQLTDEGTIPFHGKKIKEENLKKGRHLIFEATKKHCDELANELARKGITAVSYYRGCDISKIPEGDCVVVATDALCTGYTGDFDSVYDCSLMVEGTCHVDLDPTFTMGVRVCGVSAIVKGQRRGRTGRGRAGIYYYVDGSCTPSGMVPECNIVEAFDAAKAWYGLSSTEAQTILDTYRTQPGLPAIGANLDEWADLFSMVNPEPSFVNTAKRTADNYVLLTAAQLQLCHQYGYAAPNDAPRWQGARLGKKPCGVLWRLDGADACPGPEPSEVTRYQMCFTEVNTSGTAALAVGVGVAMAYLAIDTFGATCVRRCWSITSVPTGATVAPVVDEEEIVEECASFIPLEAMVAAIDKLKSTITTTSPFTLETALEKLNTFLGPHAATILAIIEYCCGLVTLPDNPFASCVFAFIAGITTPLPHKIKMFLSLFGGAIASKLTDARGALAFMMAGAAGTALGTWTSVGFVFDMLGGYAAASSTACLTFKCLMGEWPTMDQLAGLVYSAFNPAAGVVGVLSACAMFALTTAGPDHWPNRLLTMLARSNTVCNEYFIATRDIRRKILGILEASTPWSVISACIRWLHTPTEDDCGLIAWGLEIWQYVCNFFVICFNVLKAGVQSMVNIPGCPFYSCQKGYKGPWIGSGMLQARCPCGAELIFSVENGFAKLYKGPRTCSNYWRGAVPVNARLCGSARPDPTDWTSLVVNYGVRDYCKYEKLGDHIFVTAVSSPNVCFTQVPPTLRAAVAVDGVQVQCYLGEPKTPWTTSACCYGPDGKGKTVKLPFRVDGHTPGVRMQLNLRDALETNDCNSINNTPSDEAAVSALVFKQELRRTNQLLEAISAGVDTTKLPAPSIEEVVVRKRQFRARTGSLTLPPPPRSVPGVSCPESLQRSDPLEGPSNLPSSPPVLQLAMPMPLLGAGECNPFTAIGCAMTETGGGPDDLPSYPPKKEVSEWSDGSWSTTTTASSYVTGPPYPKIRGKDSTQSAPAKRPTKKKLGKSEFSCSMSYTWTDVISFKTASKVLSATRAITSGFLKQRSLVYVTEPRDAELRKQKVTINRQPLFPPSYHKQVRLAKEKASKVVGVMWDYDEVAAHTPSKSAKSHITGLRGTDVRSGAARKAVLDLQKCVEAGEIPSHYRQTVIVPKEEVFVKTPQKPTKKPPRLISYPHLEMRCVEKMYYGQVAPDVVKAVMGDAYGFVDPRTRVKRLLSMWSPDAVGATCDTVCFDSTITPEDIMVETDIYSAAKLSDQHRAGIHTIARQLYAGGPMIAYDGREIGYRRCRSSGVYTTSSSNSLTCWLKVNAAAEQAGMKNPRFLICGDDCTVIWKSAGADADKQAMRVFASWMKVMGAPQDCVPQPKYSLEELTSCSSNVTSGITKSGKPYYFLTRDPRIPLGRCSAEGLGYNPSAAWIGYLIHHYPCLWVSRVLAVHFMEQMLFEDKLPETVTFDWYGKNYTVPVEDLPSIIAGVHGIEAFSVVRYTNAEILRVSQSLTDMTMPPLRAWRKKARAVLASAKRRGGAHAKLARFLLWHATSRPLPDLDKTSVARYTTFNYCDVYSPEGDVFVTPQRRLQKFLVKYLAVIVFALGLIAVGLAIS.

2 stretches are compositionally biased toward polar residues: residues 1 to 10 and 21 to 32; these read MPVISTQTSP and QTQASYPVSIKT. Positions 1–49 are disordered; the sequence is MPVISTQTSPVPAPRTRKNKQTQASYPVSIKTSVERGQRAKRKVQRDAR. The helical transmembrane segment at 133-153 threads the bilayer; sequence WATGWFGVHLFVVCLLSLACP. N-linked (GlcNAc...) asparagine; by host glycosylation is found at N165, N212, and N264. The helical transmembrane segment at 324-344 threads the bilayer; sequence LIYYASRGKWYQLLLALMLYI. N-linked (GlcNAc...) asparagine; by host glycans are attached at residues N380, N400, N422, N446, N467, and N512. The next 5 helical transmembrane spans lie at 582 to 602, 628 to 648, 660 to 680, 706 to 726, and 737 to 757; these read AVVLILLGLCGSKYLILAYLC, AGWDVLSKAQVAPFALIFFIC, LLGFVPMAAGLPLTFFVAAAA, PRIALLVGPWPLVALLTLLHL, and IIGGLTIPPVVALVVMSRFGF. N782 carries N-linked (GlcNAc...) asparagine; by host glycosylation. A run of 2 helical transmembrane segments spans residues 790-810 and 847-867; these read FLLVLVCFPGATYDTLVTFCV and WYSHYVLKFFLLVFGENGVFF. Residues 819–940 enclose the Peptidase C18 domain; sequence TSSAASFFGT…AMPPDGWAIT (122 aa). Active-site for protease NS2 activity; shared with dimeric partner residues include H870, E888, and C909. The Peptidase S29 domain maps to 941–1122; it reads APFTLQCLSE…VCAGYHPQYT (182 aa). Residues H997 and D1021 each act as charge relay system; for serine protease NS3 activity in the active site. Residues C1037 and C1039 each coordinate Zn(2+). N-linked (GlcNAc...) asparagine; by host glycosylation occurs at N1057. S1079 functions as the Charge relay system; for serine protease NS3 activity in the catalytic mechanism. Residues C1085 and H1089 each contribute to the Zn(2+) site. The 151-residue stretch at 1131–1281 folds into the Helicase ATP-binding domain; that stretch reads PTVPNEYSVQ…ANITEIQLTD (151 aa). 1144–1151 contacts ATP; sequence APTGSGKS. S1151 and E1229 together coordinate Mg(2+). Positions 1228–1231 match the DECH box motif; the sequence is DECH. N-linked (GlcNAc...) asparagine; by host glycosylation is present at N1273. The Helicase C-terminal domain maps to 1284–1449; that stretch reads TIPFHGKKIK…GLSSTEAQTI (166 aa). N1559 carries an N-linked (GlcNAc...) asparagine; by host glycan. 5 helical membrane-spanning segments follow: residues 1565–1585, 1653–1673, 1678–1698, 1722–1742, and 1783–1803; these read ALAVGVGVAMAYLAIDTFGAT, FLGPHAATILAIIEYCCGLVT, PFASCVFAFIAGITTPLPHKI, FMMAGAAGTALGTWTSVGFVF, and AAGVVGVLSACAMFALTTAGP. The S-palmitoyl cysteine; by host moiety is linked to residue C1863. A helical membrane pass occupies residues 1864–1884; it reads GLIAWGLEIWQYVCNFFVICF. 4 residues coordinate Zn(2+): C1905, C1923, C1925, and C1947. Disordered stretches follow at residues 2139 to 2178 and 2209 to 2266; these read TGSLTLPPPPRSVPGVSCPESLQRSDPLEGPSNLPSSPPV and GPDD…TKKK. Residues 2226 to 2240 show a composition bias toward polar residues; the sequence is SDGSWSTTTTASSYV. A RdRp catalytic domain is found at 2485-2603; it reads AVGATCDTVC…IWKSAGADAD (119 aa). Residues D2491, D2589, and D2590 each coordinate Mg(2+). Residues N2640 and N2722 are each glycosylated (N-linked (GlcNAc...) asparagine; by host). The chain crosses the membrane as a helical span at residues 2844-2864; it reads VKYLAVIVFALGLIAVGLAIS.

As to quaternary structure, homooligomer. Interacts with E1 (via C-terminus). Interacts with the non-structural protein 5A. Part of the viral assembly initiation complex composed of NS2, E1, E2, NS3, NS4A, NS5A and the core protein. Forms a heterodimer with envelope glycoprotein E2. Interacts with the core protein. Interacts with protease NS2. Part of the viral assembly initiation complex composed of NS2, E1, E2, NS3, NS4A, NS5A and the core protein. In terms of assembly, forms a heterodimer with envelope glycoprotein E1. Part of the viral assembly initiation complex composed of NS2, E1, E2, NS3, NS4A, NS5A and the core protein. As to quaternary structure, homodimer. Interacts with envelope glycoprotein E1. Interacts with envelope glycoprotein E2. Interacts with viroporin p7. Interacts with serine protease/helicase NS3. Part of the replication complex composed of NS2, NS3, NS4A, NS4B, NS5A and the RNA-directed RNA polymerase embedded in an ER-derived membranous web. Part of the viral assembly initiation complex composed of NS2, E1, E2, NS3, NS4A, NS5A and the core protein. Interacts with protease NS2. Interacts with non-structural protein 4A; this interaction stabilizes the folding of NS3 serine protease. NS3-NS4A interaction is essential for NS3 activation and allows membrane anchorage of the latter. Interacts with host MAVS; this interaction leads to the cleavage and inhibition of host MAVS. Part of the replication complex composed of NS2, NS3, NS4A, NS4B, NS5A and the RNA-directed RNA polymerase embedded in an ER-derived membranous web. Part of the viral assembly initiation complex composed of NS2, E1, E2, NS3, NS4A, NS5A and the core protein. In terms of assembly, interacts with NS3 serine protease; this interaction stabilizes the folding of NS3 serine protease. NS3-NS4A interaction is essential for NS3 activation and allows membrane anchorage of the latter. Interacts with non-structural protein 5A (via N-terminus). Part of the replication complex composed of NS2, NS3, NS4A, NS4B, NS5A and the RNA-directed RNA polymerase embedded in an ER-derived membranous web. Part of the viral assembly initiation complex composed of NS2, E1, E2, NS3, NS4A, NS5A and the core protein. As to quaternary structure, monomer. Homodimer; dimerization is required for RNA-binding. Interacts with the core protein. Interacts (via N-terminus) with non-structural protein 4A. Interacts with non-structural protein 4B. Interacts with RNA-directed RNA polymerase. Part of the viral assembly initiation complex composed of NS2, E1, E2, NS3, NS4A, NS5A and the core protein. Part of the replication complex composed of NS2, NS3, NS4A, NS4B, NS5A and the RNA-directed RNA polymerase. The cofactor is Zn(2+). It depends on Mg(2+) as a cofactor. Requires Mn(2+) as cofactor. Specific enzymatic cleavages in vivo yield mature proteins. The structural proteins, core, E1, E2 and p7 are produced by proteolytic processing by host signal peptidases. The other proteins (p7, NS2, NS3, NS4A, NS4B, NS5A and NS5B) are cleaved by the viral proteases. Autoprocessing between NS2 and NS3 is mediated by the NS2 cysteine protease catalytic domain and regulated by the NS3 N-terminal domain. P13 may be further cleaved into p6 and p7 if the internal cleavage site is used. Post-translationally, highly N-glycosylated. In terms of processing, palmitoylated. This modification may play a role in its polymerization or in protein-protein interactions.

The protein localises to the virion. Its subcellular location is the host cytoplasm. It localises to the host lipid droplet. The protein resides in the virion membrane. It is found in the host endoplasmic reticulum membrane. The protein localises to the host perinuclear region. Its subcellular location is the host mitochondrion. It localises to the host nucleus. The catalysed reaction is Hydrolysis of four peptide bonds in the viral precursor polyprotein, commonly with Asp or Glu in the P6 position, Cys or Thr in P1 and Ser or Ala in P1'.. It catalyses the reaction a ribonucleoside 5'-triphosphate + H2O = a ribonucleoside 5'-diphosphate + phosphate + H(+). It carries out the reaction ATP + H2O = ADP + phosphate + H(+). The enzyme catalyses RNA(n) + a ribonucleoside 5'-triphosphate = RNA(n+1) + diphosphate. In terms of biological role, packages viral RNA to form a viral nucleocapsid, and promotes virion budding. Participates in the viral particle production as a result of its interaction with the non-structural protein 5A. Binds RNA and may function as a RNA chaperone to induce the RNA structural rearrangements taking place during virus replication. Modulates viral translation initiation by interacting with viral IRES and 40S ribosomal subunit. Probably affects various cell signaling pathways, host immunity and lipid metabolism. Forms a heterodimer with envelope glycoprotein E2, which mediates virus attachment to the host cell, virion internalization through clathrin-dependent endocytosis and fusion with host membrane. Fusion with the host cell is most likely mediated by both E1 and E2, through conformational rearrangements of the heterodimer required for fusion rather than a classical class II fusion mechanism. Its function is as follows. Forms a heterodimer with envelope glycoprotein E1, which mediates virus attachment to the host cell, virion internalization through clathrin-dependent endocytosis and fusion with host membrane. Fusion with the host cell is most likely mediated by both E1 and E2, through conformational rearrangements of the heterodimer required for fusion rather than a classical class II fusion mechanism. Functionally, may function as a multimeric ion channel protein (viroporin). In terms of biological role, cysteine protease required for the proteolytic auto-cleavage between the non-structural proteins NS2 and NS3. The N-terminus of NS3 is required for the function of NS2 protease (active region NS2-3). Promotes the initiation of viral particle assembly by mediating the interaction between structural and non-structural proteins. Displays three enzymatic activities: serine protease with a chymotrypsin-like fold, NTPase and RNA helicase. NS3 serine protease, in association with NS4A, is responsible for the cleavages of NS3-NS4A, NS4A-NS4B, NS4B-NS5A and NS5A-NS5B. The NS3/NS4A complex prevents phosphorylation of host IRF3, thus preventing the establishment of dsRNA induced antiviral state. NS3 RNA helicase binds to RNA and unwinds both dsDNA and dsRNA in the 3' to 5' direction, and likely resolves RNA complicated stable secondary structures in the template strand. Cleaves host MAVS/CARDIF thereby preventing the establishment of an antiviral state. Its function is as follows. Induces a specific membrane alteration that serves as a scaffold for the virus replication complex. This membrane alteration gives rise to the so-called ER-derived membranous web that contains the replication complex. NS4B self-interaction contributes to its function in membranous web formation. Functionally, phosphorylated protein that is indispensable for viral replication and assembly. In terms of biological role, RNA-dependent RNA polymerase that performs primer-template recognition and RNA synthesis during viral replication. Initiates RNA transcription/replication at a flavin adenine dinucleotide (FAD), resulting in a 5'- FAD cap on viral RNAs. In this way, recognition of viral 5' RNA by host pattern recognition receptors can be bypassed, thereby evading activation of antiviral pathways. The chain is Genome polyprotein from Hepatitis GB virus B (GBV-B).